A 585-amino-acid chain; its full sequence is Arginine--tRNA ligase (585 aa).

The 'HIGH' region motif lies at 127–137 (PNTNKPLHVGH).

It belongs to the class-I aminoacyl-tRNA synthetase family. In terms of assembly, monomer.

It localises to the cytoplasm. It carries out the reaction tRNA(Arg) + L-arginine + ATP = L-arginyl-tRNA(Arg) + AMP + diphosphate. The chain is Arginine--tRNA ligase from Borrelia garinii subsp. bavariensis (strain ATCC BAA-2496 / DSM 23469 / PBi) (Borreliella bavariensis).